The following is a 383-amino-acid chain: Queuine tRNA-ribosyltransferase (383 aa).

D89 serves as the catalytic Proton acceptor. Residues 89 to 93, D143, Q187, and G214 contribute to the substrate site; that span reads DSGGF. An RNA binding region spans residues 245–251; the sequence is GVGDLID. The active-site Nucleophile is the D264. The interval 269–273 is RNA binding; important for wobble base 34 recognition; that stretch reads TRNAR. Zn(2+) is bound by residues C302, C304, C307, and H333.

It belongs to the queuine tRNA-ribosyltransferase family. Homodimer. Within each dimer, one monomer is responsible for RNA recognition and catalysis, while the other monomer binds to the replacement base PreQ1. It depends on Zn(2+) as a cofactor.

The enzyme catalyses 7-aminomethyl-7-carbaguanine + guanosine(34) in tRNA = 7-aminomethyl-7-carbaguanosine(34) in tRNA + guanine. It participates in tRNA modification; tRNA-queuosine biosynthesis. Its function is as follows. Catalyzes the base-exchange of a guanine (G) residue with the queuine precursor 7-aminomethyl-7-deazaguanine (PreQ1) at position 34 (anticodon wobble position) in tRNAs with GU(N) anticodons (tRNA-Asp, -Asn, -His and -Tyr). Catalysis occurs through a double-displacement mechanism. The nucleophile active site attacks the C1' of nucleotide 34 to detach the guanine base from the RNA, forming a covalent enzyme-RNA intermediate. The proton acceptor active site deprotonates the incoming PreQ1, allowing a nucleophilic attack on the C1' of the ribose to form the product. After dissociation, two additional enzymatic reactions on the tRNA convert PreQ1 to queuine (Q), resulting in the hypermodified nucleoside queuosine (7-(((4,5-cis-dihydroxy-2-cyclopenten-1-yl)amino)methyl)-7-deazaguanosine). This is Queuine tRNA-ribosyltransferase from Thermodesulfovibrio yellowstonii (strain ATCC 51303 / DSM 11347 / YP87).